The following is a 98-amino-acid chain: Leydig cell tumor 10 kDa protein homolog (98 aa).

2 disordered regions span residues 1 to 38 and 73 to 98; these read MAQG…RVIA and SLPK…KMPA. The segment covering 16-25 has biased composition (low complexity); the sequence is SKAAAAAASA. Over residues 28 to 38 the composition is skewed to basic residues; the sequence is RGPRKGGRVIA. Over residues 73–83 the composition is skewed to low complexity; the sequence is SLPKKLALLKA.

This sequence belongs to the UPF0390 family.

Its function is as follows. May have a potential role in hypercalcemia of malignancy. The chain is Leydig cell tumor 10 kDa protein homolog from Bos taurus (Bovine).